Consider the following 135-residue polypeptide: Poly [ADP-ribose] polymerase 1 (135 aa).

In terms of domain architecture, PARP alpha-helical spans 1–21 (QAKVEMLDNLLDIEVAYSLLK). The PARP catalytic domain occupies 30–135 (DPIDINYEKL…APVTGYMFGK (106 aa)). NAD(+) contacts are provided by residues 104–106 (HGS), Gly-113, and Arg-120. The active site involves Lys-135.

Belongs to the ARTD/PARP family. As to quaternary structure, homodimer; PARP-type zinc-fingers from separate parp1 molecules form a dimer module that specifically recognizes DNA strand breaks. Poly-ADP-ribosylated on serine, glutamate and aspartate residues by autocatalysis. Auto-ADP-ribosylation on serine takes place following interaction with HPF1. Auto poly-ADP-ribosylation on serine residues promotes its dissociation from chromatin.

The protein localises to the chromosome. It is found in the nucleus. Its subcellular location is the nucleolus. It localises to the cytoplasm. The protein resides in the cytosol. It carries out the reaction NAD(+) + (ADP-D-ribosyl)n-acceptor = nicotinamide + (ADP-D-ribosyl)n+1-acceptor + H(+).. It catalyses the reaction L-seryl-[protein] + NAD(+) = O-(ADP-D-ribosyl)-L-seryl-[protein] + nicotinamide + H(+). The enzyme catalyses L-aspartyl-[protein] + NAD(+) = 4-O-(ADP-D-ribosyl)-L-aspartyl-[protein] + nicotinamide. The catalysed reaction is L-glutamyl-[protein] + NAD(+) = 5-O-(ADP-D-ribosyl)-L-glutamyl-[protein] + nicotinamide. It carries out the reaction L-tyrosyl-[protein] + NAD(+) = O-(ADP-D-ribosyl)-L-tyrosyl-[protein] + nicotinamide + H(+). It catalyses the reaction L-histidyl-[protein] + NAD(+) = N(tele)-(ADP-D-ribosyl)-L-histidyl-[protein] + nicotinamide + H(+). ADP-ribosyltransferase activity is regulated via an allosteric activation mechanism. In absence of activation signal, parp1 is autoinhibited by the PARP alpha-helical domain (also named HD region), which prevents effective NAD(+)-binding. Activity is highly stimulated by signals, such as DNA strand breaks. Binding to damaged DNA unfolds the PARP alpha-helical domain, relieving autoinhibition. Poly-ADP-ribosyltransferase activity is tightly regulated and parp1 is removed from damaged chromatin following initial poly-ADP-ribosylation of chromatin to avoid prolonged residence (trapping) that has cytotoxic consequences. A number of factors or post-translational modifications (auto-poly-ADP-ribosylation) promote parp1 removal from chromatin. In terms of biological role, poly-ADP-ribosyltransferase that mediates poly-ADP-ribosylation of proteins and plays a key role in DNA repair. Mediates glutamate, aspartate, serine, histidine or tyrosine ADP-ribosylation of proteins: the ADP-D-ribosyl group of NAD(+) is transferred to the acceptor carboxyl group of target residues and further ADP-ribosyl groups are transferred to the 2'-position of the terminal adenosine moiety, building up a polymer with an average chain length of 20-30 units. Serine ADP-ribosylation of proteins constitutes the primary form of ADP-ribosylation of proteins in response to DNA damage. Specificity for the different amino acids is conferred by interacting factors, such as hpf1 and nmnat1. Following interaction with hpf1, catalyzes serine ADP-ribosylation of target proteins; hpf1 confers serine specificity by completing the parp1 active site. Also catalyzes tyrosine ADP-ribosylation of target proteins following interaction with hpf1. Following interaction with nmnat1, catalyzes glutamate and aspartate ADP-ribosylation of target proteins; nmnat1 confers glutamate and aspartate specificity. Parp1 initiates the repair of DNA breaks: recognizes and binds DNA breaks within chromatin and recruits hpf1, licensing serine ADP-ribosylation of target proteins, such as histones (H2BS6ADPr and H3S10ADPr), thereby promoting decompaction of chromatin and the recruitment of repair factors leading to the reparation of DNA strand breaks. In addition to base excision repair (BER) pathway, also involved in double-strand breaks (DSBs) repair. Mediates the poly-ADP-ribosylation of a number of proteins. In addition to proteins, also able to ADP-ribosylate DNA: catalyzes ADP-ribosylation of DNA strand break termini containing terminal phosphates and a 2'-OH group in single- and double-stranded DNA, respectively. Parp1-mediated DNA repair in neurons plays a role in sleep: senses DNA damage in neurons and promotes sleep, facilitating efficient DNA repair. In addition to DNA repair, also involved in other processes, such as transcription regulation, programmed cell death, membrane repair, adipogenesis and innate immunity. Acts as a repressor of transcription: binds to nucleosomes and modulates chromatin structure in a manner similar to histone H1, thereby altering RNA polymerase II. Acts both as a positive and negative regulator of transcription elongation, depending on the context. Poly-ADP-ribose chains generated by parp1 also play a role in poly-ADP-ribose-dependent cell death, a process named parthanatos. Also acts as a negative regulator of the cGAS-STING pathway by mediating poly-ADP-ribosylation and inactivation of cgas. Acts as a negative regulator of adipogenesis by catalyzing poly ADP-ribosylation of histone H2B on 'Glu-35' (H2BE35ADPr). This Oncorhynchus masou (Cherry salmon) protein is Poly [ADP-ribose] polymerase 1 (parp1).